A 404-amino-acid polypeptide reads, in one-letter code: Mevalonate kinase (404 aa).

ATP contacts are provided by residues lysine 12, serine 130, and 135–141; that span reads GAGLGSS. Mg(2+) is bound by residues serine 141 and glutamate 184. Residue aspartate 195 is the Proton acceptor of the active site.

This sequence belongs to the GHMP kinase family. Mevalonate kinase subfamily. As to quaternary structure, homodimer. The cofactor is Mg(2+).

It localises to the cytoplasm. It is found in the nucleus. It carries out the reaction (R)-mevalonate + ATP = (R)-5-phosphomevalonate + ADP + H(+). It functions in the pathway isoprenoid biosynthesis; isopentenyl diphosphate biosynthesis via mevalonate pathway; isopentenyl diphosphate from (R)-mevalonate: step 1/3. Farnesyl pyrophosphate and geranyl pyrophosphate inhibit mevalonate kinase by binding competitively at the ATP-binding site. In terms of biological role, mevalonate kinase; part of the second module of ergosterol biosynthesis pathway that includes the middle steps of the pathway. Erg12 converts mevalonate into 5-phosphomevalonate. The second module is carried out in the vacuole and involves the formation of farnesyl diphosphate, which is also an important intermediate in the biosynthesis of ubiquinone, dolichol, heme and prenylated proteins. Activity by the mevalonate kinase erg12 first converts mevalonate into 5-phosphomevalonate. 5-phosphomevalonate is then further converted to 5-diphosphomevalonate by the phosphomevalonate kinase erg8. The diphosphomevalonate decarboxylase mvd1 then produces isopentenyl diphosphate. The isopentenyl-diphosphate delta-isomerase idi1 then catalyzes the 1,3-allylic rearrangement of the homoallylic substrate isopentenyl (IPP) to its highly electrophilic allylic isomer, dimethylallyl diphosphate (DMAPP). Finally the farnesyl diphosphate synthase fps1 catalyzes the sequential condensation of isopentenyl pyrophosphate with dimethylallyl pyrophosphate, and then with the resultant geranylpyrophosphate to the ultimate product farnesyl pyrophosphate. The protein is Mevalonate kinase (erg12) of Schizosaccharomyces pombe (strain 972 / ATCC 24843) (Fission yeast).